A 209-amino-acid polypeptide reads, in one-letter code: uncharacterized protein (209 aa).

This is an uncharacterized protein from Caldicellulosiruptor saccharolyticus (Caldocellum saccharolyticum).